Consider the following 111-residue polypeptide: Rubredoxin (111 aa).

In terms of domain architecture, Rubredoxin-like spans 11 to 62 (LDRFECRSCGYVYEPEKGDSKHDIAPETPFAELPINWRCPVCTAKKAAFSNI). The Fe cation site is built by C16, C19, C49, and C52.

It belongs to the rubredoxin family. The cofactor is Fe(3+).

In terms of biological role, rubredoxin is a small nonheme, iron protein lacking acid-labile sulfide. Its single Fe, chelated to 4 Cys, functions as an electron acceptor and may also stabilize the conformation of the molecule. Could be involved in hydrogenase-linked redox processes. The polypeptide is Rubredoxin (rub) (Trichormus variabilis (strain ATCC 29413 / PCC 7937) (Anabaena variabilis)).